A 603-amino-acid chain; its full sequence is Glutathione-regulated potassium-efflux system protein KefB (603 aa).

A run of 13 helical transmembrane segments spans residues 5–25 (ALLT…PIAA), 29–49 (IGAV…GLGF), 55–75 (AILH…GLEL), 87–107 (IFGV…GALY), 115–135 (SALI…LQLM), 152–172 (VLLF…ILAG), 180–202 (WERI…YLVR), 207–227 (FIAA…LVLG), 230–250 (LFME…GILL), 268–288 (GLLL…GILY), 291–311 (IVKI…VLYF), 326–346 (FAGV…AAAS), and 356–376 (PLLL…MQLI). In terms of domain architecture, RCK N-terminal spans 400-521 (EPQVIVVGFG…VRHFSRETFS (122 aa)).

The protein belongs to the monovalent cation:proton antiporter 2 (CPA2) transporter (TC 2.A.37) family. KefB subfamily. Interacts with the regulatory subunit KefG.

It localises to the cell inner membrane. In terms of biological role, pore-forming subunit of a potassium efflux system that confers protection against electrophiles. Catalyzes K(+)/H(+) antiport. The chain is Glutathione-regulated potassium-efflux system protein KefB from Pectobacterium carotovorum subsp. carotovorum (strain PC1).